The chain runs to 204 residues: Transcriptional regulator GfcR (204 aa).

Belongs to the purine/pyrimidine phosphoribosyltransferase family. GfcR subfamily.

This Methanoculleus marisnigri (strain ATCC 35101 / DSM 1498 / JR1) protein is Transcriptional regulator GfcR.